We begin with the raw amino-acid sequence, 364 residues long: Cobalt-precorrin-5B C(1)-methyltransferase (364 aa).

The protein belongs to the CbiD family.

It catalyses the reaction Co-precorrin-5B + S-adenosyl-L-methionine = Co-precorrin-6A + S-adenosyl-L-homocysteine. It participates in cofactor biosynthesis; adenosylcobalamin biosynthesis; cob(II)yrinate a,c-diamide from sirohydrochlorin (anaerobic route): step 6/10. In terms of biological role, catalyzes the methylation of C-1 in cobalt-precorrin-5B to form cobalt-precorrin-6A. The polypeptide is Cobalt-precorrin-5B C(1)-methyltransferase (Pseudomonas entomophila (strain L48)).